Reading from the N-terminus, the 178-residue chain is Thymidine kinase (178 aa).

13-20 (GPMFAGKS) contacts ATP. Glu85 (proton acceptor) is an active-site residue. Phe115 is a binding site for substrate. Zn(2+)-binding residues include Cys140 and Cys143. 159 to 163 (IEVIG) is a binding site for substrate. Residues Cys172 and Cys175 each coordinate Zn(2+).

The protein belongs to the thymidine kinase family.

The catalysed reaction is thymidine + ATP = dTMP + ADP + H(+). This chain is Thymidine kinase (TK), found in Oryctolagus cuniculus (Rabbit).